The following is a 1009-amino-acid chain: Protein-tyrosine kinase 2-beta (1009 aa).

The FERM domain maps to 39-359; the sequence is RILKVCFYSN…GYCRLQGEHK (321 aa). Phosphoserine is present on residues Ser-361, Ser-375, and Ser-399. Residue Tyr-402 is modified to Phosphotyrosine; by autocatalysis. A Protein kinase domain is found at 425–683; it reads VVLNRILGEG…ELVCSLSDIY (259 aa). ATP is bound by residues 431–439, Lys-457, and 503–509; these read LGEGFFGEV and ELYPYGE. The Proton acceptor role is filled by Asp-549. Tyr-579 carries the post-translational modification Phosphotyrosine. Tyr-580 carries the post-translational modification Phosphotyrosine; by SRC, FYN and LCK. The segment at 696 to 728 is disordered; it reads NARYRPPKILEPTTFQEPPPKPSRPKYRPPPQT. The span at 712-727 shows a compositional bias: pro residues; sequence EPPPKPSRPKYRPPPQ. Tyr-722 carries the post-translational modification Phosphotyrosine. The residue at position 762 (Ser-762) is a Phosphoserine. Thr-765 carries the post-translational modification Phosphothreonine. An interaction with TGFB1I1 region spans residues 801-1009; it reads KIKMKQVLER…VANLAHPPAE (209 aa). At Tyr-834 the chain carries Phosphotyrosine. Ser-839 bears the Phosphoserine mark. Residue Thr-842 is modified to Phosphothreonine. Tyr-849 carries the phosphotyrosine modification. Phosphoserine is present on Ser-866. Positions 868–1009 are focal adhesion targeting (FAT); that stretch reads QPTANLDRTD…VANLAHPPAE (142 aa). Tyr-881 bears the Phosphotyrosine mark.

It belongs to the protein kinase superfamily. Tyr protein kinase family. FAK subfamily. As to quaternary structure, homodimer, or homooligomer. Interacts with KCNA2. Interacts with NPHP1, ASAP1, ASAP2, ARHGAP26, SKAP2 and TGFB1I1. The Tyr-402 phosphorylated form interacts with SRC (via SH2 domain) and SRC family members. Forms a signaling complex with EPHA1, LCK and phosphatidylinositol 3-kinase; upon activation by EFNA1. Interacts with GRB2 (via SH2 domain). Interacts with P53/TP53 and MDM2. Interacts with MYLK. Interacts with BCAR1. Interacts with RB1CC1. Interacts with RHOU. Interacts with VAV1. Interacts with PDPK1. Interacts with DLG4. Interacts with LPXN and PTPN12. Interacts with SIRPA and SH2D3C. Interacts (hypophosphorylated) with PXN. Interacts with ARHGAP10. In terms of processing, phosphorylated on tyrosine residues in response to various stimuli that elevate the intracellular calcium concentration; this activation is indirect and may be mediated by production of reactive oxygen species (ROS). Tyr-402 is the major autophosphorylation site, but other kinases can also phosphorylate Tyr-402. Autophosphorylation occurs in trans, i.e. one subunit of the dimeric receptor phosphorylates tyrosine residues on the other subunit. Phosphorylation at Tyr-402 promotes interaction with SRC and SRC family members, leading to phosphorylation at Tyr-579; Tyr-580 and Tyr-881. Phosphorylation at Tyr-881 is important for interaction with GRB2. Phosphorylated on tyrosine residues upon activation of FGR and PKC. Recruitment by NPHP1 to cell matrix adhesions initiates Tyr-402 phosphorylation. In monocytes, adherence to substrata is required for tyrosine phosphorylation and kinase activation. Angiotensin II, thapsigargin and L-alpha-lysophosphatidic acid (LPA) also induce autophosphorylation and increase kinase activity. Phosphorylation by MYLK promotes ITGB2 activation and is thus essential to trigger neutrophil transmigration during lung injury. Dephosphorylated by PTPN12.

The protein localises to the cytoplasm. It localises to the perinuclear region. It is found in the cell membrane. Its subcellular location is the cell junction. The protein resides in the focal adhesion. The protein localises to the cell projection. It localises to the lamellipodium. It is found in the cell cortex. Its subcellular location is the nucleus. The enzyme catalyses L-tyrosyl-[protein] + ATP = O-phospho-L-tyrosyl-[protein] + ADP + H(+). Its activity is regulated as follows. Activated in response to stimuli that lead to increased intracellular Ca(2+) levels; this activation is indirect and may be mediated by calcium-mediated production of reactive oxygen species (ROS). Activated by autophosphorylation at Tyr-402; this creates a binding site for SRC family kinases and leads to phosphorylation at additional tyrosine residues. Phosphorylation at Tyr-402, Tyr-579 and Tyr-580 is required for optimal kinase activity. Non-receptor protein-tyrosine kinase that regulates reorganization of the actin cytoskeleton, cell polarization, cell migration, adhesion, spreading and bone remodeling. Plays a role in the regulation of the humoral immune response, and is required for normal levels of marginal B-cells in the spleen and normal migration of splenic B-cells. Required for normal macrophage polarization and migration towards sites of inflammation. Regulates cytoskeleton rearrangement and cell spreading in T-cells, and contributes to the regulation of T-cell responses. Promotes osteoclastic bone resorption; this requires both PTK2B/PYK2 and SRC. May inhibit differentiation and activity of osteoprogenitor cells. Functions in signaling downstream of integrin and collagen receptors, immune receptors, G-protein coupled receptors (GPCR), cytokine, chemokine and growth factor receptors, and mediates responses to cellular stress. Forms multisubunit signaling complexes with SRC and SRC family members upon activation; this leads to the phosphorylation of additional tyrosine residues, creating binding sites for scaffold proteins, effectors and substrates. Regulates numerous signaling pathways. Promotes activation of phosphatidylinositol 3-kinase and of the AKT1 signaling cascade. Promotes activation of NOS3. Regulates production of the cellular messenger cGMP. Promotes activation of the MAP kinase signaling cascade, including activation of MAPK1/ERK2, MAPK3/ERK1 and MAPK8/JNK1. Promotes activation of Rho family GTPases, such as RHOA and RAC1. Recruits the ubiquitin ligase MDM2 to P53/TP53 in the nucleus, and thereby regulates P53/TP53 activity, P53/TP53 ubiquitination and proteasomal degradation. Acts as a scaffold, binding to both PDPK1 and SRC, thereby allowing SRC to phosphorylate PDPK1 at 'Tyr-9, 'Tyr-373', and 'Tyr-376'. Promotes phosphorylation of NMDA receptors by SRC family members, and thereby contributes to the regulation of NMDA receptor ion channel activity and intracellular Ca(2+) levels. May also regulate potassium ion transport by phosphorylation of potassium channel subunits. Phosphorylates SRC; this increases SRC kinase activity. Phosphorylates ASAP1, NPHP1, KCNA2 and SHC1. Promotes phosphorylation of ASAP2, RHOU and PXN; this requires both SRC and PTK2/PYK2. This is Protein-tyrosine kinase 2-beta (Ptk2b) from Mus musculus (Mouse).